The following is an 88-amino-acid chain: Elongation factor 1-beta (88 aa).

It belongs to the EF-1-beta/EF-1-delta family.

Promotes the exchange of GDP for GTP in EF-1-alpha/GDP, thus allowing the regeneration of EF-1-alpha/GTP that could then be used to form the ternary complex EF-1-alpha/GTP/AAtRNA. This Natronomonas pharaonis (strain ATCC 35678 / DSM 2160 / CIP 103997 / JCM 8858 / NBRC 14720 / NCIMB 2260 / Gabara) (Halobacterium pharaonis) protein is Elongation factor 1-beta.